We begin with the raw amino-acid sequence, 278 residues long: Inositol oxygenase (278 aa).

Residues arginine 22 and 78 to 80 (DES) contribute to the substrate site. Residues histidine 91, histidine 116, and aspartate 117 each contribute to the Fe cation site. Substrate contacts are provided by residues lysine 120 and 134–135 (GD). Fe cation-binding residues include histidine 187, histidine 213, and aspartate 246. 213–214 (HS) is a substrate binding site.

This sequence belongs to the myo-inositol oxygenase family. Fe cation is required as a cofactor.

It is found in the cytoplasm. It carries out the reaction myo-inositol + O2 = D-glucuronate + H2O + H(+). It participates in polyol metabolism; myo-inositol degradation into D-glucuronate; D-glucuronate from myo-inositol: step 1/1. The protein is Inositol oxygenase (miox) of Danio rerio (Zebrafish).